Consider the following 270-residue polypeptide: tRNA pseudouridine synthase A (270 aa).

Asp-51 functions as the Nucleophile in the catalytic mechanism. Tyr-109 lines the substrate pocket.

The protein belongs to the tRNA pseudouridine synthase TruA family. As to quaternary structure, homodimer.

It carries out the reaction uridine(38/39/40) in tRNA = pseudouridine(38/39/40) in tRNA. Functionally, formation of pseudouridine at positions 38, 39 and 40 in the anticodon stem and loop of transfer RNAs. The chain is tRNA pseudouridine synthase A from Burkholderia vietnamiensis (strain G4 / LMG 22486) (Burkholderia cepacia (strain R1808)).